Here is a 173-residue protein sequence, read N- to C-terminus: Globin-like host-protective antigen (173 aa).

Positions Met-1–Ala-15 are cleaved as a signal peptide. In terms of domain architecture, Globin spans Ala-25–Ala-166. His-114 provides a ligand contact to heme b.

This sequence belongs to the globin family.

The protein resides in the secreted. Its subcellular location is the extracellular space. Its function is as follows. May be a globin and may play a role in oxygen transport. In Trichostrongylus colubriformis (Black scour worm), this protein is Globin-like host-protective antigen.